Here is a 128-residue protein sequence, read N- to C-terminus: Nanos homolog 1 (128 aa).

The segment at 7–23 (FDSWSDYLGLSSLISRG) is essential for its translational repressor activity. The interval 25 to 52 (QPQREGERPRWDVLSPASAEPLPSNESV) is disordered. The Nanos-type zinc finger occupies 56 to 110 (GCGFCRSNREALSLYTSHRLRALDGRVLCPVLRGYTCPLCGANGDWAHTMRYCPL). Residues cysteine 57, cysteine 60, histidine 73, cysteine 84, cysteine 92, cysteine 95, histidine 103, and cysteine 108 each contribute to the Zn(2+) site. 2 consecutive short sequence motifs (C2HC) follow at residues 57 to 84 (CGFC…RVLC) and 92 to 108 (CPLC…MRYC).

It belongs to the nanos family. Interacts with ccnb1. Ovary and testis.

It is found in the cytoplasm. Its subcellular location is the perinuclear region. Its function is as follows. Acts as a translational repressor. Can mediate repression affecting different steps in the translation process: cap-driven, IRES-driven, polyadenylated RNAs or nonpolyadenylated RNAs. Essential for the development of primordial germ cells (PGCs) by ensuring their proper migration and survival. This Xenopus laevis (African clawed frog) protein is Nanos homolog 1 (nanos1).